The chain runs to 235 residues: Segregation and condensation protein A (235 aa).

Belongs to the ScpA family. In terms of assembly, component of a cohesin-like complex composed of ScpA, ScpB and the Smc homodimer, in which ScpA and ScpB bind to the head domain of Smc. The presence of the three proteins is required for the association of the complex with DNA.

Its subcellular location is the cytoplasm. Functionally, participates in chromosomal partition during cell division. May act via the formation of a condensin-like complex containing Smc and ScpB that pull DNA away from mid-cell into both cell halves. The protein is Segregation and condensation protein A of Streptococcus agalactiae serotype Ia (strain ATCC 27591 / A909 / CDC SS700).